We begin with the raw amino-acid sequence, 235 residues long: Carboxymethylenebutenolidase 2 (235 aa).

Residues cysteine 117, aspartate 173, and histidine 204 contribute to the active site.

The protein belongs to the dienelactone hydrolase family. Monomer.

The enzyme catalyses 2-(5-oxo-2,5-dihydrofuran-2-ylidene)acetate + H2O = 4-oxohex-2-enedioate + H(+). Its pathway is aromatic compound metabolism; 3-chlorocatechol degradation. Ring cleavage of cyclic ester dienelactone to produce maleylacetate. The chain is Carboxymethylenebutenolidase 2 (tfdEII) from Cupriavidus pinatubonensis (strain JMP 134 / LMG 1197) (Cupriavidus necator (strain JMP 134)).